The chain runs to 310 residues: N-acetylmuramic acid 6-phosphate etherase (310 aa).

The SIS domain maps to 64-227 (ITSRLKSNGR…STSVMIKLGK (164 aa)). The active-site Proton donor is the glutamate 92. Glutamate 123 is an active-site residue.

This sequence belongs to the GCKR-like family. MurNAc-6-P etherase subfamily. As to quaternary structure, homodimer.

It catalyses the reaction N-acetyl-D-muramate 6-phosphate + H2O = N-acetyl-D-glucosamine 6-phosphate + (R)-lactate. It functions in the pathway amino-sugar metabolism; N-acetylmuramate degradation. In terms of biological role, specifically catalyzes the cleavage of the D-lactyl ether substituent of MurNAc 6-phosphate, producing GlcNAc 6-phosphate and D-lactate. The chain is N-acetylmuramic acid 6-phosphate etherase from Prochlorococcus marinus (strain NATL2A).